We begin with the raw amino-acid sequence, 104 residues long: L-rhamnose mutarotase (104 aa).

A substrate-binding site is contributed by tyrosine 18. Histidine 22 serves as the catalytic Proton donor. Substrate-binding positions include tyrosine 41 and 76 to 77 (WW).

It belongs to the rhamnose mutarotase family. Homodimer.

It localises to the cytoplasm. The enzyme catalyses alpha-L-rhamnose = beta-L-rhamnose. It participates in carbohydrate metabolism; L-rhamnose metabolism. Its function is as follows. Involved in the anomeric conversion of L-rhamnose. This chain is L-rhamnose mutarotase, found in Pectobacterium carotovorum subsp. carotovorum (strain PC1).